We begin with the raw amino-acid sequence, 194 residues long: MPEPYYSMYRKEDVVLDKSFFTPLEGKPDHFRTISKMWGMWEASEDHWKEVITKFWGYITLIEDDNLVYLHDLTSTVFDLANQKVPESFEGQSVLPIMRQHQDNQRKGVLGQLAGHFVYFEQRMWRRKDYKLVFNATDVCELYNIRNDPEEMHNLFYDPQYNRIKKEMLEEMRAEMKRLNDPLENWVYRIIDEI.

This is an uncharacterized protein from Haemophilus influenzae (strain ATCC 51907 / DSM 11121 / KW20 / Rd).